The chain runs to 226 residues: Late protein I226R (226 aa).

The first 16 residues, M1–G16, serve as a signal peptide directing secretion. Residue N164 is glycosylated (N-linked (GlcNAc...) asparagine; by host).

Belongs to the asfivirus I226R family.

Functionally, plays a role in the inhibition of host NF-kappa-B and IRF3 signaling pathways. Mechanistically, promotes the degradation of host IKBKG through enhancing its ubiquitination leading to inhibition of both pathways. In African swine fever virus (isolate Pig/Kenya/KEN-50/1950) (ASFV), this protein is Late protein I226R.